Consider the following 345-residue polypeptide: MSEMTYKDAGVDIDKEAFAVRAIRDVLEKYKVEPEGCREVEGIGHYAAVLEVHGELLTLNVDGVGSKVLVAQLVGRYDTVGIDAIAMNANDAVCLGARPLAFLDYLAMEDPDPDVCAEIAEGLGKGAREAGAPIVGGELATLPEVIRGKEEGRGFDLVVACLGRVEGDPITGEDVEPGDAIVGLRSSGIHSNGLTLARKVLLSEYDVHDELPHGRTVAEELLEPTRIYVRPVMEVLRDYEVRGIAHITGGGVENLKRLRDDVRYVLDDPFEPHPVFEIIRELGNVPVEEMYRTFNMGMGMALIVPEEEAEDVVDTVSKHVEAKIVGHVEEGRGVVVHMDGHEVKL.

This sequence belongs to the AIR synthase family.

Its subcellular location is the cytoplasm. The enzyme catalyses 2-formamido-N(1)-(5-O-phospho-beta-D-ribosyl)acetamidine + ATP = 5-amino-1-(5-phospho-beta-D-ribosyl)imidazole + ADP + phosphate + H(+). The protein operates within purine metabolism; IMP biosynthesis via de novo pathway; 5-amino-1-(5-phospho-D-ribosyl)imidazole from N(2)-formyl-N(1)-(5-phospho-D-ribosyl)glycinamide: step 2/2. This Methanopyrus kandleri (strain AV19 / DSM 6324 / JCM 9639 / NBRC 100938) protein is Phosphoribosylformylglycinamidine cyclo-ligase.